The sequence spans 157 residues: Endoribonuclease YbeY (157 aa).

Zn(2+) contacts are provided by H111, H115, and H121.

It belongs to the endoribonuclease YbeY family. Zn(2+) serves as cofactor.

It is found in the cytoplasm. Functionally, single strand-specific metallo-endoribonuclease involved in late-stage 70S ribosome quality control and in maturation of the 3' terminus of the 16S rRNA. This chain is Endoribonuclease YbeY, found in Pseudomonas putida (strain W619).